Reading from the N-terminus, the 553-residue chain is Dihydroxy-acid dehydratase (553 aa).

Residue Asp-78 participates in Mg(2+) binding. Residue Cys-119 coordinates [2Fe-2S] cluster. Positions 120 and 121 each coordinate Mg(2+). Lys-121 is modified (N6-carboxylysine). Cys-193 provides a ligand contact to [2Fe-2S] cluster. Glu-441 contacts Mg(2+). The Proton acceptor role is filled by Ser-467.

This sequence belongs to the IlvD/Edd family. Homodimer. Requires [2Fe-2S] cluster as cofactor. The cofactor is Mg(2+).

It carries out the reaction (2R)-2,3-dihydroxy-3-methylbutanoate = 3-methyl-2-oxobutanoate + H2O. The catalysed reaction is (2R,3R)-2,3-dihydroxy-3-methylpentanoate = (S)-3-methyl-2-oxopentanoate + H2O. The protein operates within amino-acid biosynthesis; L-isoleucine biosynthesis; L-isoleucine from 2-oxobutanoate: step 3/4. It participates in amino-acid biosynthesis; L-valine biosynthesis; L-valine from pyruvate: step 3/4. Its function is as follows. Functions in the biosynthesis of branched-chain amino acids. Catalyzes the dehydration of (2R,3R)-2,3-dihydroxy-3-methylpentanoate (2,3-dihydroxy-3-methylvalerate) into 2-oxo-3-methylpentanoate (2-oxo-3-methylvalerate) and of (2R)-2,3-dihydroxy-3-methylbutanoate (2,3-dihydroxyisovalerate) into 2-oxo-3-methylbutanoate (2-oxoisovalerate), the penultimate precursor to L-isoleucine and L-valine, respectively. The sequence is that of Dihydroxy-acid dehydratase from Citrifermentans bemidjiense (strain ATCC BAA-1014 / DSM 16622 / JCM 12645 / Bem) (Geobacter bemidjiensis).